The following is a 250-amino-acid chain: Bcl-2-like protein 12 (250 aa).

The segment at 24 to 46 is disordered; sequence GEAAGSPVPTPPRSPAQEEPTDF. A Phosphoserine modification is found at Ser29. A Phosphothreonine modification is found at Thr33. The residue at position 37 (Ser37) is a Phosphoserine. Arg60 bears the Omega-N-methylarginine mark. A phosphoserine mark is found at Ser111, Ser158, Ser159, Ser161, and Ser189. Positions 227–238 match the BH2 motif; it reads WIQAHGGWEGIL.

This sequence belongs to the Bcl-2 family. In terms of tissue distribution, expressed mainly in breast, thymus, prostate, fetal liver, colon, placenta, pancreas, small intestine, spinal cord, kidney, and bone marrow and to a lesser extent in many other tissues. Isoform 2 is primarily expressed in skeletal muscle.

The polypeptide is Bcl-2-like protein 12 (Homo sapiens (Human)).